The sequence spans 96 residues: Co-chaperonin GroES (96 aa).

This sequence belongs to the GroES chaperonin family. As to quaternary structure, heptamer of 7 subunits arranged in a ring. Interacts with the chaperonin GroEL.

Its subcellular location is the cytoplasm. Its function is as follows. Together with the chaperonin GroEL, plays an essential role in assisting protein folding. The GroEL-GroES system forms a nano-cage that allows encapsulation of the non-native substrate proteins and provides a physical environment optimized to promote and accelerate protein folding. GroES binds to the apical surface of the GroEL ring, thereby capping the opening of the GroEL channel. The polypeptide is Co-chaperonin GroES (Methylobacillus flagellatus (strain ATCC 51484 / DSM 6875 / VKM B-1610 / KT)).